We begin with the raw amino-acid sequence, 328 residues long: Flagellar motor switch protein FliM (328 aa).

The segment at 1–45 (MSDVLSQEEINQLIEALMKGELKEEDLLKEEEEKKVKPYDFKRPS) is interaction with unphosphorylated CheY.

Belongs to the FliM family. Interacts (via N-terminus) with unphosphorylated CheY. Interacts (via central domain) with FliG (via central domain or via central domain and C-terminus).

The protein localises to the cell inner membrane. The protein resides in the bacterial flagellum basal body. In terms of biological role, fliM is one of three proteins (FliG, FliN, FliM) that forms the rotor-mounted switch complex (C ring), located at the base of the basal body. This complex interacts with the CheY and CheX chemotaxis proteins, in addition to contacting components of the motor that determine the direction of flagellar rotation. This chain is Flagellar motor switch protein FliM, found in Thermotoga maritima (strain ATCC 43589 / DSM 3109 / JCM 10099 / NBRC 100826 / MSB8).